We begin with the raw amino-acid sequence, 801 residues long: Xaa-Pro dipeptidyl-peptidase (801 aa).

Active-site charge relay system residues include serine 371, aspartate 491, and histidine 522.

This sequence belongs to the peptidase S15 family. As to quaternary structure, homodimer.

The protein resides in the cytoplasm. The catalysed reaction is Hydrolyzes Xaa-Pro-|- bonds to release unblocked, N-terminal dipeptides from substrates including Ala-Pro-|-p-nitroanilide and (sequentially) Tyr-Pro-|-Phe-Pro-|-Gly-Pro-|-Ile.. Removes N-terminal dipeptides sequentially from polypeptides having unsubstituted N-termini provided that the penultimate residue is proline. This Ligilactobacillus salivarius (strain UCC118) (Lactobacillus salivarius) protein is Xaa-Pro dipeptidyl-peptidase.